We begin with the raw amino-acid sequence, 164 residues long: Putative pre-16S rRNA nuclease (164 aa).

The protein belongs to the YqgF nuclease family.

It is found in the cytoplasm. In terms of biological role, could be a nuclease involved in processing of the 5'-end of pre-16S rRNA. The protein is Putative pre-16S rRNA nuclease of Rhizobium rhizogenes (strain K84 / ATCC BAA-868) (Agrobacterium radiobacter).